The sequence spans 656 residues: Protein NO VEIN-LIKE (656 aa).

Positions 283 to 375 (DKDYCGKHTR…HVKQKIPKSA (93 aa)) are disordered. Residues 299–308 (EENDSADYEV) are compositionally biased toward acidic residues. Residues 342-353 (ESRNHEKSDSPK) are compositionally biased toward basic and acidic residues. Basic residues predominate over residues 354–371 (LLRRGPSKLRRGHVKQKI).

This Arabidopsis thaliana (Mouse-ear cress) protein is Protein NO VEIN-LIKE.